Here is a 331-residue protein sequence, read N- to C-terminus: GTP 3',8-cyclase (331 aa).

Positions Pro6–Pro231 constitute a Radical SAM core domain. A GTP-binding site is contributed by Arg15. Cys22 and Cys26 together coordinate [4Fe-4S] cluster. Tyr28 serves as a coordination point for S-adenosyl-L-methionine. Cys29 is a binding site for [4Fe-4S] cluster. Arg64 contacts GTP. S-adenosyl-L-methionine is bound at residue Gly68. Thr98 is a binding site for GTP. An S-adenosyl-L-methionine-binding site is contributed by Ser122. Lys158 contributes to the GTP binding site. Residue Met192 participates in S-adenosyl-L-methionine binding. Residues Cys255 and Cys258 each contribute to the [4Fe-4S] cluster site. Arg260–Arg262 provides a ligand contact to GTP. [4Fe-4S] cluster is bound at residue Cys272.

This sequence belongs to the radical SAM superfamily. MoaA family. As to quaternary structure, monomer and homodimer. [4Fe-4S] cluster serves as cofactor.

It carries out the reaction GTP + AH2 + S-adenosyl-L-methionine = (8S)-3',8-cyclo-7,8-dihydroguanosine 5'-triphosphate + 5'-deoxyadenosine + L-methionine + A + H(+). It functions in the pathway cofactor biosynthesis; molybdopterin biosynthesis. Catalyzes the cyclization of GTP to (8S)-3',8-cyclo-7,8-dihydroguanosine 5'-triphosphate. The chain is GTP 3',8-cyclase from Mesorhizobium japonicum (strain LMG 29417 / CECT 9101 / MAFF 303099) (Mesorhizobium loti (strain MAFF 303099)).